Consider the following 367-residue polypeptide: DNA replication and repair protein RecF (367 aa).

30-37 is a binding site for ATP; that stretch reads GANGSGKT.

Belongs to the RecF family.

It localises to the cytoplasm. Functionally, the RecF protein is involved in DNA metabolism; it is required for DNA replication and normal SOS inducibility. RecF binds preferentially to single-stranded, linear DNA. It also seems to bind ATP. This Pseudomonas fluorescens (strain Pf0-1) protein is DNA replication and repair protein RecF.